A 303-amino-acid polypeptide reads, in one-letter code: 5-dehydro-4-deoxyglucarate dehydratase (303 aa).

This sequence belongs to the DapA family.

The catalysed reaction is 5-dehydro-4-deoxy-D-glucarate + H(+) = 2,5-dioxopentanoate + CO2 + H2O. It functions in the pathway carbohydrate acid metabolism; D-glucarate degradation; 2,5-dioxopentanoate from D-glucarate: step 2/2. In Pseudomonas putida (Arthrobacter siderocapsulatus), this protein is 5-dehydro-4-deoxyglucarate dehydratase.